Consider the following 88-residue polypeptide: Large ribosomal subunit protein uL23c (88 aa).

This sequence belongs to the universal ribosomal protein uL23 family. Part of the 50S ribosomal subunit.

The protein resides in the plastid. It is found in the chloroplast. Functionally, binds to 23S rRNA. The protein is Large ribosomal subunit protein uL23c (rpl23) of Spirogyra maxima (Green alga).